The sequence spans 237 residues: Phosphatidylserine decarboxylase proenzyme (237 aa).

Serine 206 serves as the catalytic Schiff-base intermediate with substrate; via pyruvic acid. Serine 206 is modified (pyruvic acid (Ser); by autocatalysis).

It belongs to the phosphatidylserine decarboxylase family. PSD-A subfamily. Heterodimer of a large membrane-associated beta subunit and a small pyruvoyl-containing alpha subunit. Pyruvate is required as a cofactor. Post-translationally, is synthesized initially as an inactive proenzyme. Formation of the active enzyme involves a self-maturation process in which the active site pyruvoyl group is generated from an internal serine residue via an autocatalytic post-translational modification. Two non-identical subunits are generated from the proenzyme in this reaction, and the pyruvate is formed at the N-terminus of the alpha chain, which is derived from the carboxyl end of the proenzyme. The post-translation cleavage follows an unusual pathway, termed non-hydrolytic serinolysis, in which the side chain hydroxyl group of the serine supplies its oxygen atom to form the C-terminus of the beta chain, while the remainder of the serine residue undergoes an oxidative deamination to produce ammonia and the pyruvoyl prosthetic group on the alpha chain.

The protein resides in the cell membrane. It catalyses the reaction a 1,2-diacyl-sn-glycero-3-phospho-L-serine + H(+) = a 1,2-diacyl-sn-glycero-3-phosphoethanolamine + CO2. It participates in phospholipid metabolism; phosphatidylethanolamine biosynthesis; phosphatidylethanolamine from CDP-diacylglycerol: step 2/2. Catalyzes the formation of phosphatidylethanolamine (PtdEtn) from phosphatidylserine (PtdSer). The protein is Phosphatidylserine decarboxylase proenzyme of Nocardia farcinica (strain IFM 10152).